The primary structure comprises 196 residues: Imidazoleglycerol-phosphate dehydratase (196 aa).

Belongs to the imidazoleglycerol-phosphate dehydratase family.

The protein resides in the cytoplasm. It catalyses the reaction D-erythro-1-(imidazol-4-yl)glycerol 3-phosphate = 3-(imidazol-4-yl)-2-oxopropyl phosphate + H2O. It participates in amino-acid biosynthesis; L-histidine biosynthesis; L-histidine from 5-phospho-alpha-D-ribose 1-diphosphate: step 6/9. In Phenylobacterium zucineum (strain HLK1), this protein is Imidazoleglycerol-phosphate dehydratase.